The primary structure comprises 353 residues: Rhodopsin (353 aa).

Over 1 to 36 the chain is Extracellular; that stretch reads MNGTEGPYFYIPMVNTTGIVRSPYEYPQYYLVNPAA. 2 N-linked (GlcNAc...) asparagine glycosylation sites follow: N2 and N15. Residues 37–61 form a helical membrane-spanning segment; the sequence is YAALGAYMFLLILIGFPVNFLTLYV. The Cytoplasmic segment spans residues 62-73; it reads TIEHKKLRTPLN. Residues 74 to 96 form a helical membrane-spanning segment; that stretch reads YILLNLAVADLFMVFGGFTTTMY. Over 97–110 the chain is Extracellular; it reads TSMHGYFVLGRLGC. C110 and C187 are oxidised to a cystine. Residues 111-133 form a helical membrane-spanning segment; sequence NLEGFFATLGGEIALWSLVVLAV. Residues 134-136 carry the 'Ionic lock' involved in activated form stabilization motif; sequence ERW. The Cytoplasmic portion of the chain corresponds to 134-152; that stretch reads ERWMVVCKPISNFRFGEDH. Residues 153–173 form a helical membrane-spanning segment; the sequence is AIMGLAFTWVMAAACAVPPLV. Residues 174–202 are Extracellular-facing; it reads GWSRYIPEGMQCSCGIDYYTRAEGFNNES. N-linked (GlcNAc...) asparagine glycosylation occurs at N200. A helical transmembrane segment spans residues 203–224; it reads FVIYMFVCHFLIPLVVVFFCYG. Topologically, residues 225–252 are cytoplasmic; it reads RLLCAVKEAAAAQQESETTQRAEREVSR. Residues 253–274 form a helical membrane-spanning segment; the sequence is MVVIMVVAFLVCWCPYAGVAWY. Residues 275–286 lie on the Extracellular side of the membrane; the sequence is IFTHQGSEFGPL. Residues 287-308 traverse the membrane as a helical segment; that stretch reads FMTFPAFFAKSSSIYNPMIYIC. An N6-(retinylidene)lysine modification is found at K296. Residues 309–353 lie on the Cytoplasmic side of the membrane; the sequence is MNKQFRQCMITTLCCGKNPFEEEEGASTTSKTEASSVSSSSVSPA. 2 S-palmitoyl cysteine lipidation sites follow: C322 and C323. The tract at residues 329–353 is disordered; sequence EEEEGASTTSKTEASSVSSSSVSPA. Positions 334–353 are enriched in low complexity; that stretch reads ASTTSKTEASSVSSSSVSPA.

This sequence belongs to the G-protein coupled receptor 1 family. Opsin subfamily. Post-translationally, phosphorylated on some or all of the serine and threonine residues present in the C-terminal region. Contains one covalently linked retinal chromophore.

Its subcellular location is the membrane. The protein resides in the cell projection. The protein localises to the cilium. It localises to the photoreceptor outer segment. Its function is as follows. Photoreceptor required for image-forming vision at low light intensity. While most salt water fish species use retinal as chromophore, most freshwater fish use 3-dehydroretinal, or a mixture of retinal and 3-dehydroretinal. Light-induced isomerization of 11-cis to all-trans retinal triggers a conformational change that activates signaling via G-proteins. Subsequent receptor phosphorylation mediates displacement of the bound G-protein alpha subunit by arrestin and terminates signaling. This is Rhodopsin (rho) from Chelon auratus (Golden grey mullet).